Reading from the N-terminus, the 261-residue chain is MGKAVSQLTSRKDEDKPILPDNPAMASQAANYFSTGSSKPAHSCMPYEKAASSSFVTCPTCQGNGEIPQEQEKQLVALIPYGDQRLKPRRTKLFVFLSVAICLLIFSLTIFFLYPRPIAVRPVGLNSSTVTFEDAHVQLNTTNVLNIFNSNFYPITVTQLTAEVLHQASVVGQVTSSLRLHIGPLASEQMPYEVASRILDENTYKICTWPKIRVHHILLNIQGSLTCSFLSHPQQLPFESFEYVDCRENMSLPHLELPRPA.

A disordered region spans residues 1 to 23 (MGKAVSQLTSRKDEDKPILPDNP). The chain crosses the membrane as a helical span at residues 93–113 (LFVFLSVAICLLIFSLTIFFL).

This sequence belongs to the TMEM106 family. In terms of tissue distribution, expressed in liver, spleen, lung, kidney, lymph nodes and adipose tissue (at protein level). Expressed by macrophages.

The protein resides in the cell membrane. Its function is as follows. Activates macrophages and polarizes them into M1-like macrophages through the activation of the MAPK and NF-kappaB signaling pathway. Upon activation, up-regulates the expression of CD80, CD86, CD69 and MHC II on macrophages, and induces the release of pro-inflammatory cytokines such as TNF, IL1B, IL6, CCL2 and nitric oxide. May play a role in inhibition of proliferation and migration. The sequence is that of Transmembrane protein 106A (Tmem106a) from Mus musculus (Mouse).